We begin with the raw amino-acid sequence, 371 residues long: Glutamate 5-kinase (371 aa).

Lys-12 contributes to the ATP binding site. Positions 52, 136, and 148 each coordinate substrate. Residues 168 to 169 (SD) and 210 to 216 (TGGMRTK) contribute to the ATP site. A PUA domain is found at 275-354 (QGEILVDEGA…EDIAEKFGYS (80 aa)).

The protein belongs to the glutamate 5-kinase family.

The protein resides in the cytoplasm. The enzyme catalyses L-glutamate + ATP = L-glutamyl 5-phosphate + ADP. Its pathway is amino-acid biosynthesis; L-proline biosynthesis; L-glutamate 5-semialdehyde from L-glutamate: step 1/2. Its function is as follows. Catalyzes the transfer of a phosphate group to glutamate to form L-glutamate 5-phosphate. This Idiomarina loihiensis (strain ATCC BAA-735 / DSM 15497 / L2-TR) protein is Glutamate 5-kinase.